Reading from the N-terminus, the 103-residue chain is UPF0145 protein CYA_2258 (103 aa).

It belongs to the UPF0145 family.

This chain is UPF0145 protein CYA_2258, found in Synechococcus sp. (strain JA-3-3Ab) (Cyanobacteria bacterium Yellowstone A-Prime).